The chain runs to 410 residues: Argininosuccinate synthase (410 aa).

10 to 18 (AYSGGLDTS) is a binding site for ATP. L-citrulline-binding residues include Tyr-88 and Ser-93. Gly-118 is an ATP binding site. Residues Thr-120, Asn-124, and Asp-125 each coordinate L-aspartate. Asn-124 contacts L-citrulline. L-citrulline contacts are provided by Arg-128, Ser-177, Ser-186, Glu-262, and Tyr-274.

This sequence belongs to the argininosuccinate synthase family. Type 1 subfamily. In terms of assembly, homotetramer.

Its subcellular location is the cytoplasm. The catalysed reaction is L-citrulline + L-aspartate + ATP = 2-(N(omega)-L-arginino)succinate + AMP + diphosphate + H(+). It participates in amino-acid biosynthesis; L-arginine biosynthesis; L-arginine from L-ornithine and carbamoyl phosphate: step 2/3. The sequence is that of Argininosuccinate synthase from Caldanaerobacter subterraneus subsp. tengcongensis (strain DSM 15242 / JCM 11007 / NBRC 100824 / MB4) (Thermoanaerobacter tengcongensis).